Consider the following 244-residue polypeptide: Ribosomal RNA small subunit methyltransferase NEP1 (244 aa).

The segment at 1–34 (MAAPSDGFKPRERSGGEQAQDWDALPPKRPRLGA) is disordered. Residue Ala-2 is modified to N-acetylalanine. 2 positions are modified to phosphoserine: Ser-5 and Ser-14. S-adenosyl-L-methionine contacts are provided by residues Thr-176, Gly-201, Gly-206, and 219 to 224 (ISNYPL).

It belongs to the class IV-like SAM-binding methyltransferase superfamily. RNA methyltransferase NEP1 family. As to quaternary structure, homodimer. Part of the small subunit (SSU) processome, composed of more than 70 proteins and the RNA chaperone small nucleolar RNA (snoRNA) U3.

It is found in the nucleus. The protein resides in the nucleolus. The enzyme catalyses pseudouridine(1248) in human 18S rRNA + S-adenosyl-L-methionine = N(1)-methylpseudouridine(1248) in human 18S rRNA + S-adenosyl-L-homocysteine + H(+). In terms of biological role, S-adenosyl-L-methionine-dependent pseudouridine N(1)-methyltransferase that methylates pseudouridine at position 1248 (Psi1248) in 18S rRNA. Involved the biosynthesis of the hypermodified N1-methyl-N3-(3-amino-3-carboxypropyl) pseudouridine (m1acp3-Psi) conserved in eukaryotic 18S rRNA. Is not able to methylate uridine at this position. Also has an essential role in 40S ribosomal subunit biogenesis independent on its methyltransferase activity, facilitating the incorporation of ribosomal protein S19 during the formation of pre-ribosomes. Part of the small subunit (SSU) processome, first precursor of the small eukaryotic ribosomal subunit. During the assembly of the SSU processome in the nucleolus, many ribosome biogenesis factors, an RNA chaperone and ribosomal proteins associate with the nascent pre-rRNA and work in concert to generate RNA folding, modifications, rearrangements and cleavage as well as targeted degradation of pre-ribosomal RNA by the RNA exosome. The chain is Ribosomal RNA small subunit methyltransferase NEP1 from Homo sapiens (Human).